The following is a 1124-amino-acid chain: Zinc finger E-box-binding homeobox 1 (1124 aa).

Disordered regions lie at residues 1 to 124 (MADG…NHDP) and 142 to 163 (APEE…NGTP). Residues 18 to 30 (NNVTNYNTVVETN) are compositionally biased toward low complexity. 2 positions are modified to phosphoserine: serine 31 and serine 33. Acidic residues predominate over residues 44 to 62 (EESVTDAADCEGVPEDDLP). The segment covering 72–91 (SSEREGNAKNCWEDDRKEGQ) has biased composition (basic and acidic residues). Residues 170 to 193 (LTCPYCDRGYKRFTSLKEHIKYRH) form a C2H2-type 1 zinc finger. Residues lysine 186 and lysine 195 each participate in a glycyl lysine isopeptide (Lys-Gly) (interchain with G-Cter in SUMO2) cross-link. C2H2-type zinc fingers lie at residues 200 to 222 (FSCS…MTSH) and 240 to 262 (FKCT…LRIH). A C2H2-type 4; atypical zinc finger spans residues 268–292 (YECPNCKKRFSHSGSYSSHISSKKC). Residues 304–327 (TGLKTSQCSSPSLSASPGSPTRPQ) form a disordered region. Lysine 307 participates in a covalent cross-link: Glycyl lysine isopeptide (Lys-Gly) (interchain with G-Cter in SUMO2). A compositionally biased stretch (low complexity) spans 309–322 (SQCSSPSLSASPGS). Residues serine 313 and serine 322 each carry the phosphoserine modification. Glycyl lysine isopeptide (Lys-Gly) (interchain with G-Cter in SUMO2) cross-links involve residues lysine 331 and lysine 335. Residue lysine 347 forms a Glycyl lysine isopeptide (Lys-Gly) (interchain with G-Cter in SUMO); alternate linkage. Lysine 347 participates in a covalent cross-link: Glycyl lysine isopeptide (Lys-Gly) (interchain with G-Cter in SUMO2); alternate. Glycyl lysine isopeptide (Lys-Gly) (interchain with G-Cter in SUMO2) cross-links involve residues lysine 439, lysine 493, lysine 504, lysine 515, lysine 548, and lysine 553. Disordered stretches follow at residues 551–586 (DLKQ…SPSQ) and 636–714 (QISV…SSSR). Residues 581–640 (NLSPSQPPLKNLLSLLKAYYALNAQPSAEELSKIADSVNLPLDVVKKWFEKMQAGQISVQ) constitute a DNA-binding region (homeobox; atypical). Serine 642, serine 679, serine 686, serine 693, and serine 700 each carry phosphoserine. Positions 656 to 687 (AKNNDQPQSANANEPQDSTVNLQSPLKMTNSP) are enriched in polar residues. Residues 692 to 714 (GSTTNGSRSSTPSPSPLNLSSSR) are compositionally biased toward low complexity. The residue at position 702 (threonine 702) is a Phosphothreonine. At serine 704 the chain carries Phosphoserine. Residue lysine 774 forms a Glycyl lysine isopeptide (Lys-Gly) (interchain with G-Cter in SUMO); alternate linkage. Residue lysine 774 forms a Glycyl lysine isopeptide (Lys-Gly) (interchain with G-Cter in SUMO2); alternate linkage. The segment at 856–898 (PPLKVIQPNGNQDERQDTSSEGVSNVEDQNDSDSTPPKKKMRK) is disordered. Positions 874–890 (SSEGVSNVEDQNDSDST) are enriched in polar residues. 2 C2H2-type zinc fingers span residues 904 to 926 (YACD…KYEH) and 932 to 954 (HECG…MRLH). The segment at 960-981 (YQCDKCGKRFSHSGSYSQHMNH) adopts a C2H2-type 7; atypical zinc-finger fold. The interval 989–1124 (EAEERDSTEQ…QVSEEKTNEA (136 aa)) is disordered. Composition is skewed to acidic residues over residues 1031-1052 (EEDE…ELQE) and 1062-1084 (DEEE…ENEG). Over residues 1085 to 1099 (EEAKTEGLMKDDRAE) the composition is skewed to basic and acidic residues. Positions 1100–1115 (SQASSLGQKVGESSEQ) are enriched in polar residues.

Belongs to the delta-EF1/ZFH-1 C2H2-type zinc-finger family. As to quaternary structure, interacts (via N-terminus) with SMARCA4/BRG1. Ubiquitinated, leading to degradation in a proteasome-dependent manner. Deubiquitinated by USP51, leading to stabilization. As to expression, colocalizes with SMARCA4/BRG1 in E-cadherin-negative cells from established lines, and stroma of normal colon as well as in de-differentiated epithelial cells at the invasion front of colorectal carcinomas (at protein level). Expressed in heart and skeletal muscle, but not in liver, spleen, or pancreas.

The protein localises to the nucleus. Its function is as follows. Acts as a transcriptional repressor. Inhibits interleukin-2 (IL-2) gene expression. Enhances or represses the promoter activity of the ATP1A1 gene depending on the quantity of cDNA and on the cell type. Represses E-cadherin promoter and induces an epithelial-mesenchymal transition (EMT) by recruiting SMARCA4/BRG1. Represses BCL6 transcription in the presence of the corepressor CTBP1. Positively regulates neuronal differentiation. Represses RCOR1 transcription activation during neurogenesis. Represses transcription by binding to the E box (5'-CANNTG-3'). In the absence of TGFB1, acts as a repressor of COL1A2 transcription via binding to the E-box in the upstream enhancer region. The polypeptide is Zinc finger E-box-binding homeobox 1 (Homo sapiens (Human)).